A 672-amino-acid chain; its full sequence is tRNA 5-methylaminomethyl-2-thiouridine biosynthesis bifunctional protein MnmC (672 aa).

Residues 1–243 (MTSITHAELG…KREMIAGCME (243 aa)) are tRNA (mnm(5)s(2)U34)-methyltransferase. The interval 269–672 (IGGGIASAAL…LRKGKAITEL (404 aa)) is FAD-dependent cmnm(5)s(2)U34 oxidoreductase.

In the N-terminal section; belongs to the methyltransferase superfamily. tRNA (mnm(5)s(2)U34)-methyltransferase family. The protein in the C-terminal section; belongs to the DAO family. FAD serves as cofactor.

It is found in the cytoplasm. The enzyme catalyses 5-aminomethyl-2-thiouridine(34) in tRNA + S-adenosyl-L-methionine = 5-methylaminomethyl-2-thiouridine(34) in tRNA + S-adenosyl-L-homocysteine + H(+). Its function is as follows. Catalyzes the last two steps in the biosynthesis of 5-methylaminomethyl-2-thiouridine (mnm(5)s(2)U) at the wobble position (U34) in tRNA. Catalyzes the FAD-dependent demodification of cmnm(5)s(2)U34 to nm(5)s(2)U34, followed by the transfer of a methyl group from S-adenosyl-L-methionine to nm(5)s(2)U34, to form mnm(5)s(2)U34. The chain is tRNA 5-methylaminomethyl-2-thiouridine biosynthesis bifunctional protein MnmC from Vibrio vulnificus (strain CMCP6).